A 144-amino-acid polypeptide reads, in one-letter code: Globin-1 (144 aa).

The Globin domain occupies 1 to 141 (VSANDIKNVQ…ILHQMSSYFA (141 aa)). H89 provides a ligand contact to heme b.

This sequence belongs to the globin family. Homodimer.

The protein is Globin-1 of Phreagena soyoae (Deep-sea cold-seep clam).